Reading from the N-terminus, the 921-residue chain is Probable glucan 1,3-alpha-glucosidase (921 aa).

Residues 1 to 20 form the signal peptide; that stretch reads MRSLLFVLSLICFCSQTALS. The Nucleophile role is filled by aspartate 512. Residue glutamate 515 is part of the active site. The Proton donor role is filled by aspartate 588. Asparagine 689 and asparagine 804 each carry an N-linked (GlcNAc...) asparagine glycan.

This sequence belongs to the glycosyl hydrolase 31 family. Heterodimer of a catalytic alpha subunit (PSL5) and a beta subunit (PSL4). Expressed in roots, rosette leaves, leaf blades, mature stems, cauline leaves, flower buds, flowers and siliques.

The protein resides in the endoplasmic reticulum. The enzyme catalyses Hydrolysis of terminal (1-&gt;3)-alpha-D-glucosidic links in (1-&gt;3)-alpha-D-glucans.. The protein operates within glycan metabolism; N-glycan metabolism. Functionally, cleaves sequentially the 2 innermost alpha-1,3-linked glucose residues from the Glc(2)Man(9)GlcNAc(2) oligosaccharide precursor of immature glycoproteins. Essential for stable accumulation of the receptor EFR that determines the specific perception of bacterial elongation factor Tu (EF-Tu), a potent elicitor of the defense response to pathogen-associated molecular patterns (PAMPs). Required for sustained activation of EFR-mediated signaling, but not receptor FLS2-mediated signaling elicited by the bacterial flagellin flg22. This Arabidopsis thaliana (Mouse-ear cress) protein is Probable glucan 1,3-alpha-glucosidase (PSL5).